The primary structure comprises 70 residues: Protein SlyX homolog (70 aa).

This sequence belongs to the SlyX family.

This Pseudoalteromonas atlantica (strain T6c / ATCC BAA-1087) protein is Protein SlyX homolog.